Here is a 100-residue protein sequence, read N- to C-terminus: Urease subunit gamma (100 aa).

Belongs to the urease gamma subunit family. Heterotrimer of UreA (gamma), UreB (beta) and UreC (alpha) subunits. Three heterotrimers associate to form the active enzyme.

The protein localises to the cytoplasm. The enzyme catalyses urea + 2 H2O + H(+) = hydrogencarbonate + 2 NH4(+). It participates in nitrogen metabolism; urea degradation; CO(2) and NH(3) from urea (urease route): step 1/1. This Burkholderia orbicola (strain MC0-3) protein is Urease subunit gamma.